Here is a 721-residue protein sequence, read N- to C-terminus: Leucine-rich repeat flightless-interacting protein 2 (721 aa).

The tract at residues M1–E370 is DVL3-binding. A Phosphoserine modification is found at S18. Positions E22–R49 form a coiled coil. Phosphoserine is present on residues G96, L101, Y168, S173, S190, and S202. 2 disordered regions span residues S232–V262 and K295–D338. Composition is skewed to polar residues over residues P237 to D251 and T305 to D338. Phosphoserine is present on residues S309, S312, S320, S324, and S328. Phosphothreonine is present on T331. 2 positions are modified to phosphoserine: S332 and S333. Coiled coils occupy residues D349–H524 and L566–R714.

This sequence belongs to the LRRFIP family. In terms of assembly, interacts (via N-terminus) with DVL3. Interacts with FLII. Weakly interacts with MYD88 in resting cells. Following LPS-stimulation, the interaction with MYD88 is rapidly enhanced; the complex gradually dissociates to basal levels after 6 hours of stimulation. Interaction with MYD88 is regulated by LPS-induced phosphorylation at Ser-202. In the presence of LPS, competes with FLII for MYD88-binding. Post-translationally, ser-190 and Ser-202 are phosphorylated in response to LPS stimulation. Ser-202 phosphorylation regulates the LPS-induced interaction with MYD88. As to expression, widely expressed, with highest levels in heart and skeletal muscle.

In terms of biological role, may function as activator of the canonical Wnt signaling pathway, in association with DVL3, upstream of CTNNB1/beta-catenin. Positively regulates Toll-like receptor (TLR) signaling in response to agonist probably by competing with the negative FLII regulator for MYD88-binding. This chain is Leucine-rich repeat flightless-interacting protein 2 (LRRFIP2), found in Homo sapiens (Human).